Reading from the N-terminus, the 375-residue chain is tRNA-specific 2-thiouridylase MnmA (375 aa).

Residues 7-14 (GLSGGVDS) and M33 contribute to the ATP site. Residues 102 to 104 (NPD) are interaction with target base in tRNA. The Nucleophile role is filled by C107. C107 and C205 are oxidised to a cystine. Position 132 (G132) interacts with ATP. Residues 155 to 157 (KDQ) form an interaction with tRNA region. C205 functions as the Cysteine persulfide intermediate in the catalytic mechanism. The interval 313–314 (RY) is interaction with tRNA.

This sequence belongs to the MnmA/TRMU family.

It localises to the cytoplasm. It catalyses the reaction S-sulfanyl-L-cysteinyl-[protein] + uridine(34) in tRNA + AH2 + ATP = 2-thiouridine(34) in tRNA + L-cysteinyl-[protein] + A + AMP + diphosphate + H(+). Functionally, catalyzes the 2-thiolation of uridine at the wobble position (U34) of tRNA, leading to the formation of s(2)U34. The chain is tRNA-specific 2-thiouridylase MnmA from Phytoplasma australiense.